The sequence spans 697 residues: Elongation factor G (697 aa).

Residues 8–287 (ERVRNIGIAA…AVVDYLPAPT (280 aa)) form the tr-type G domain. GTP contacts are provided by residues 17-24 (AHIDAGKT), 81-85 (DTPGH), and 135-138 (NKMD).

Belongs to the TRAFAC class translation factor GTPase superfamily. Classic translation factor GTPase family. EF-G/EF-2 subfamily.

Its subcellular location is the cytoplasm. Catalyzes the GTP-dependent ribosomal translocation step during translation elongation. During this step, the ribosome changes from the pre-translocational (PRE) to the post-translocational (POST) state as the newly formed A-site-bound peptidyl-tRNA and P-site-bound deacylated tRNA move to the P and E sites, respectively. Catalyzes the coordinated movement of the two tRNA molecules, the mRNA and conformational changes in the ribosome. The sequence is that of Elongation factor G (fusA) from Arthrospira platensis (Spirulina platensis).